Reading from the N-terminus, the 198-residue chain is Ras-like protein 2 (198 aa).

GTP is bound at residue 18–25 (GDGGVGKS). An Effector region motif is present at residues 40–48 (YDPTIEDSY). GTP-binding positions include 65-69 (DTAGQ) and 124-127 (NKCD). C195 is subject to Cysteine methyl ester. C195 is lipidated: S-farnesyl cysteine. Residues 196 to 198 (IVM) constitute a propeptide, removed in mature form.

This sequence belongs to the small GTPase superfamily. Ras family.

The protein resides in the cell membrane. The enzyme catalyses GTP + H2O = GDP + phosphate + H(+). Its activity is regulated as follows. Alternates between an inactive form bound to GDP and an active form bound to GTP. Activated by a guanine nucleotide-exchange factor (GEF) and inactivated by a GTPase-activating protein (GAP). The chain is Ras-like protein 2 (RAS2) from Mucor circinelloides f. lusitanicus (Mucor racemosus var. lusitanicus).